Consider the following 364-residue polypeptide: Tubulin alpha-2 chain (364 aa).

Residues G59, T60, T94, N121, and N144 each coordinate GTP. E170 is a catalytic residue.

Belongs to the tubulin family. As to quaternary structure, dimer of alpha and beta chains. A typical microtubule is a hollow water-filled tube with an outer diameter of 25 nm and an inner diameter of 15 nM. Alpha-beta heterodimers associate head-to-tail to form protofilaments running lengthwise along the microtubule wall with the beta-tubulin subunit facing the microtubule plus end conferring a structural polarity. Microtubules usually have 13 protofilaments but different protofilament numbers can be found in some organisms and specialized cells. Mg(2+) is required as a cofactor. Post-translationally, undergoes a tyrosination/detyrosination cycle, the cyclic removal and re-addition of a C-terminal tyrosine residue by the enzymes tubulin tyrosine carboxypeptidase (TTCP) and tubulin tyrosine ligase (TTL), respectively.

It localises to the cytoplasm. It is found in the cytoskeleton. The catalysed reaction is GTP + H2O = GDP + phosphate + H(+). Tubulin is the major constituent of microtubules, a cylinder consisting of laterally associated linear protofilaments composed of alpha- and beta-tubulin heterodimers. Microtubules grow by the addition of GTP-tubulin dimers to the microtubule end, where a stabilizing cap forms. Below the cap, tubulin dimers are in GDP-bound state, owing to GTPase activity of alpha-tubulin. In Anemia phyllitidis (Fern), this protein is Tubulin alpha-2 chain (TUBA2).